Here is a 125-residue protein sequence, read N- to C-terminus: Plastocyanin (125 aa).

Positions 1 to 34 (MKVLASFARRLSLFAVAAVLCVGSFFLSAAPASA) are cleaved as a signal peptide. A Plastocyanin-like domain is found at 35–125 (QTVAIKMGAD…AGMVGKIVVQ (91 aa)). His73, Cys110, His113, and Met118 together coordinate Cu cation.

This sequence belongs to the plastocyanin family. The cofactor is Cu(2+).

It is found in the cellular thylakoid membrane. In terms of biological role, participates in electron transfer between P700 and the cytochrome b6-f complex in photosystem I. The sequence is that of Plastocyanin (petE) from Synechococcus elongatus (strain ATCC 33912 / PCC 7942 / FACHB-805) (Anacystis nidulans R2).